We begin with the raw amino-acid sequence, 1113 residues long: MSTAGISDEASASAFTTAGYCPQLIKGIDSVLIIGSGGLSIGQAGEFDYSGSQAIKALKETGKRTILINPNIATNQTSYSLADEVYFLPVTPEFITHVIKRERPDGILLTFGGQTGLNCGVALQRAGTLEKYGVTVLGTPISVLETTEDRELFARALKEINMPIAESVACSTVEDAVAAANDIGYPVIVRSAYALGGLGSGFADDDLQLRQLCAQSLALSPQVLVEKSLKGWKEIEYEVVRDRVGNCITVCNMENFDPLGIHTGDSIVLAPSQTLSDEEFHMLRTAAIEIIRHLGVVGECNVQYALQPDGLAFKVIEVNARLSRSSALASKATGYPLAYTAAKIALGYTLPELPNPVTKSTVANFEPSLDYIVAKVPRWDLSKFQHVDKTIGSAMKSVGEVMAIGRNFEEAFQKAFRQVDPSLLGFQGSDEFADLDEALQFPTDRRWLAVGEALMNRGYSVERVHELTKIDRFFLHKCMNIVRMQKQLETLGSINRLDEVLLRKAKKLGFCDKQIARAISDDLSELDIRALRKSFGILPFVKRIDTMAAEVPAVTNYLYVTYNAVKDDVTFGDNGIMVLGSGVYRIGSSVEFDWCAVNTVQALRKEGHKTIMINYNPETVSTDFDEVDRLYFEELSFERVMDIYEAECASGCVISMGGQQPQNIASQLYEQGANILGTSPEDIDKAEDRHKFSTILDTLGLDQPRWSELKSLSEVKHFLDDVGYPVLVRPSYVLSGAAMSTVYNSEDLEGVFESAVAVSPEHPVVISKFIEGAQELDIDAVAYKGSLLVHAISEHVENAGVHSGDATLVLPPQSLKEEEKTRLKQLAAQVAAAWNITGPFNMQIIKTAEGGHTCLKIIECNIRASRSFPFVSKVLGVNFVEIAVKAFLGGDLVPPSCDLMARSYNYVATKCPQFSFTRLPGADPFLGVEMASVGEVAAFGSNALESYWVALQGLMSFCVPLPPSGILLGGDLSKEHLGRVAALLAPHGFTLLALSEATCEYLSRYLPAESSVTVLQMPETGREVRALFEQHNVQCVVNLAARRASSPIDPDYRIRRSAIDFAVPLFNEPQTTMLFARALSAYLPAELEMRQSDGPETPSYVLPWREYLGFKPT.

Residues 23-420 (QLIKGIDSVL…AFQKAFRQVD (398 aa)) are carboxyphosphate synthetic domain. R150, R190, G196, G197, K227, L229, E234, G260, I261, H262, Q303, and E317 together coordinate ATP. Residues 154–346 (ARALKEINMP…LAYTAAKIAL (193 aa)) form the ATP-grasp 1 domain. Mg(2+)-binding residues include Q303, E317, and N319. Positions 303, 317, and 319 each coordinate Mn(2+). An oligomerization domain region spans residues 421 to 568 (PSLLGFQGSD…YVTYNAVKDD (148 aa)). The carbamoyl phosphate synthetic domain stretch occupies residues 569-955 (VTFGDNGIMV…SYWVALQGLM (387 aa)). An ATP-grasp 2 domain is found at 693–888 (STILDTLGLD…FVEIAVKAFL (196 aa)). R729, K768, I770, E775, G800, V801, H802, S803, Q843, and E859 together coordinate ATP. Mg(2+) is bound by residues Q843, E859, and N861. Positions 843, 859, and 861 each coordinate Mn(2+). Positions 956–1097 (SFCVPLPPSG…EMRQSDGPET (142 aa)) are allosteric domain. An MGS-like domain is found at 957-1113 (FCVPLPPSGI…WREYLGFKPT (157 aa)).

Belongs to the CarB family. As to quaternary structure, heterodimer composed of 2 chains; the small (or glutamine) chain promotes the hydrolysis of glutamine to ammonia, which is used by the large (or ammonia) chain to synthesize carbamoyl phosphate. Requires Mg(2+) as cofactor. The cofactor is Mn(2+).

The protein resides in the cytoplasm. It catalyses the reaction hydrogencarbonate + L-glutamine + 2 ATP + H2O = carbamoyl phosphate + L-glutamate + 2 ADP + phosphate + 2 H(+). The catalysed reaction is hydrogencarbonate + NH4(+) + 2 ATP = carbamoyl phosphate + 2 ADP + phosphate + 2 H(+). It participates in amino-acid biosynthesis; L-arginine biosynthesis; carbamoyl phosphate from bicarbonate: step 1/1. In terms of biological role, large subunit of the arginine-specific carbamoyl phosphate synthase (CPSase). CPSase catalyzes the formation of carbamoyl phosphate from the ammonia moiety of glutamine, hydrogencarbonate, and phosphate donated by ATP, constituting the first step of 2 biosynthetic pathways, one leading to arginine and/or urea and the other to pyrimidine nucleotides. The large subunit (synthetase) binds the substrates ammonia (free or transferred from glutamine from the small subunit), hydrogencarbonate and ATP and carries out an ATP-coupled ligase reaction, activating hydrogencarbonate by forming carboxy phosphate which reacts with ammonia to form carbamoyl phosphate. The protein is Carbamoyl phosphate synthase arginine-specific large chain (CPA2) of Eremothecium gossypii (strain ATCC 10895 / CBS 109.51 / FGSC 9923 / NRRL Y-1056) (Yeast).